We begin with the raw amino-acid sequence, 163 residues long: Nucleotide-binding protein BSU11020 (163 aa).

Belongs to the YajQ family.

In terms of biological role, nucleotide-binding protein. This is Nucleotide-binding protein BSU11020 (yitK) from Bacillus subtilis (strain 168).